The following is a 383-amino-acid chain: ATP phosphoribosyltransferase regulatory subunit (383 aa).

It belongs to the class-II aminoacyl-tRNA synthetase family. HisZ subfamily. In terms of assembly, heteromultimer composed of HisG and HisZ subunits.

It localises to the cytoplasm. It functions in the pathway amino-acid biosynthesis; L-histidine biosynthesis; L-histidine from 5-phospho-alpha-D-ribose 1-diphosphate: step 1/9. Functionally, required for the first step of histidine biosynthesis. May allow the feedback regulation of ATP phosphoribosyltransferase activity by histidine. This is ATP phosphoribosyltransferase regulatory subunit from Neisseria gonorrhoeae (strain ATCC 700825 / FA 1090).